Here is a 417-residue protein sequence, read N- to C-terminus: Gamma-glutamyl phosphate reductase (417 aa).

Belongs to the gamma-glutamyl phosphate reductase family.

It localises to the cytoplasm. It catalyses the reaction L-glutamate 5-semialdehyde + phosphate + NADP(+) = L-glutamyl 5-phosphate + NADPH + H(+). Its pathway is amino-acid biosynthesis; L-proline biosynthesis; L-glutamate 5-semialdehyde from L-glutamate: step 2/2. Functionally, catalyzes the NADPH-dependent reduction of L-glutamate 5-phosphate into L-glutamate 5-semialdehyde and phosphate. The product spontaneously undergoes cyclization to form 1-pyrroline-5-carboxylate. In Meiothermus ruber, this protein is Gamma-glutamyl phosphate reductase.